Here is a 478-residue protein sequence, read N- to C-terminus: Ankyrin repeat and BTB/POZ domain-containing protein 1 (478 aa).

ANK repeat units lie at residues 1–31 (MDTS…EVNV) and 35–64 (WDST…RCEA). 2 BTB domains span residues 115–182 (SDVV…DIGV) and 272–346 (PDIC…ELPP). Residues 450–478 (TVQTYSAIEEAQQQLRALENLLVSIGLDC) are a coiled coil.

Its subcellular location is the cytoplasm. Its function is as follows. May act as a mediator of the PTEN growth-suppressive signaling pathway. May play a role in developmental processes. This chain is Ankyrin repeat and BTB/POZ domain-containing protein 1, found in Rattus norvegicus (Rat).